The primary structure comprises 874 residues: Alanine--tRNA ligase (874 aa).

Zn(2+) contacts are provided by H563, H567, C665, and H669.

Belongs to the class-II aminoacyl-tRNA synthetase family. The cofactor is Zn(2+).

It localises to the cytoplasm. The catalysed reaction is tRNA(Ala) + L-alanine + ATP = L-alanyl-tRNA(Ala) + AMP + diphosphate. Its function is as follows. Catalyzes the attachment of alanine to tRNA(Ala) in a two-step reaction: alanine is first activated by ATP to form Ala-AMP and then transferred to the acceptor end of tRNA(Ala). Also edits incorrectly charged Ser-tRNA(Ala) and Gly-tRNA(Ala) via its editing domain. In Actinobacillus pleuropneumoniae serotype 3 (strain JL03), this protein is Alanine--tRNA ligase.